Reading from the N-terminus, the 368-residue chain is Ribulose bisphosphate carboxylase-like protein 1 (368 aa).

The protein belongs to the RuBisCO large chain family. Type IV subfamily.

Its function is as follows. Unknown. Probably does not have RuBisCO activity. In Rhodopseudomonas palustris (strain ATCC BAA-98 / CGA009), this protein is Ribulose bisphosphate carboxylase-like protein 1 (rlp1).